A 465-amino-acid polypeptide reads, in one-letter code: Glutamate--tRNA ligase 1 (465 aa).

A 'HIGH' region motif is present at residues 8–18; sequence PSPTGLMHLGN. The short motif at 249 to 253 is the 'KMSKS' region element; that stretch reads PLSKR. An ATP-binding site is contributed by lysine 252.

Belongs to the class-I aminoacyl-tRNA synthetase family. Glutamate--tRNA ligase type 1 subfamily. In terms of assembly, monomer.

It is found in the cytoplasm. The catalysed reaction is tRNA(Glu) + L-glutamate + ATP = L-glutamyl-tRNA(Glu) + AMP + diphosphate. Its function is as follows. Catalyzes the attachment of glutamate to tRNA(Glu) in a two-step reaction: glutamate is first activated by ATP to form Glu-AMP and then transferred to the acceptor end of tRNA(Glu). In Coxiella burnetii (strain CbuG_Q212) (Coxiella burnetii (strain Q212)), this protein is Glutamate--tRNA ligase 1.